We begin with the raw amino-acid sequence, 796 residues long: MSSYQSEYNADEQAAIDKEFTRLANNKSIYLDHAGTTLYAESQVTAAAEQLQRDVICNPHTCRVTGDYVDQVRFKLLEFFNTKEDEYHVIFTANATAALSLVAENFDFGRQGNFHYCQENHTSVLGMRERVQARAMYMLKEEEITGMASVPSAANGVSGSSPGDNSLVTFSAQCNFSGYKIPLAAIAGIQKQGLPHGLGKKISGEAPQTTDNNNYYVCLDAASFVATNPLDLQRYRPDYVCISFYKIFGYPTGVGALLVSRRGAEAFRKKRNFFGGGTINYAYPHAMDHQLREVFHQRYEDGTLPFLSIVGLLEGFRTLERLVPRRSVNGGDVATMERISRHVHGLAQHLEKQLRQLKYPNGQPLIELYNRVGYEERHRQGGIVAFNVRTDAGPFVGFGEIACVAALQGILLRTGCFCNIGACQRYLGLDETMMDAIYKRAGRICGDYYDLIDGQPTGAVRVSFGYMTRRQDVDELLKMLHLSYLATKPQQRLQLIEEQAGELPKALKERAQRLRPQLLQLAIYPVKSCAAFKIEEGGGSGGGGSGGTWPLTAQGLQYDREWMIVDMNGMAVTQKRCSELCLIRPLIRDDQLVLHFGDSPDGVSLPLSLADQAENSSRCRSKVCRQPVEGLDCGDEVALWLSQHLGLEGLRLLRQSSQRSTTNGVRQQQKLSLVNQAQFLLVNRSSVRSLQFEESLDETVDRFRANIIIDTGSAFEELSYKQLTIGQVQFQVEGPCQRCDMICINQRTGERSPETLTTISRLQSGKMRFGIYISRISTENNKESQHLTCGDVVVVT.

At Lys-246 the chain carries N6-(pyridoxal phosphate)lysine. The active site involves Cys-418. The region spanning Leu-650–Thr-796 is the MOSC domain. Phosphoserine is present on Ser-752.

This sequence belongs to the class-V pyridoxal-phosphate-dependent aminotransferase family. MOCOS subfamily. Pyridoxal 5'-phosphate is required as a cofactor.

The catalysed reaction is Mo-molybdopterin + L-cysteine + AH2 = thio-Mo-molybdopterin + L-alanine + A + H2O. Its function is as follows. Sulfurates the molybdenum cofactor. Sulfation of molybdenum is essential for xanthine dehydrogenase (XDH) and aldehyde oxidase (ADO) enzymes in which molybdenum cofactor is liganded by 1 oxygen and 1 sulfur atom in active form. The polypeptide is Molybdenum cofactor sulfurase (Drosophila persimilis (Fruit fly)).